A 473-amino-acid chain; its full sequence is Aspartyl/glutamyl-tRNA(Asn/Gln) amidotransferase subunit B (473 aa).

The protein belongs to the GatB/GatE family. GatB subfamily. Heterotrimer of A, B and C subunits.

It carries out the reaction L-glutamyl-tRNA(Gln) + L-glutamine + ATP + H2O = L-glutaminyl-tRNA(Gln) + L-glutamate + ADP + phosphate + H(+). The enzyme catalyses L-aspartyl-tRNA(Asn) + L-glutamine + ATP + H2O = L-asparaginyl-tRNA(Asn) + L-glutamate + ADP + phosphate + 2 H(+). Allows the formation of correctly charged Asn-tRNA(Asn) or Gln-tRNA(Gln) through the transamidation of misacylated Asp-tRNA(Asn) or Glu-tRNA(Gln) in organisms which lack either or both of asparaginyl-tRNA or glutaminyl-tRNA synthetases. The reaction takes place in the presence of glutamine and ATP through an activated phospho-Asp-tRNA(Asn) or phospho-Glu-tRNA(Gln). This is Aspartyl/glutamyl-tRNA(Asn/Gln) amidotransferase subunit B from Wolbachia pipientis subsp. Culex pipiens (strain wPip).